Reading from the N-terminus, the 237-residue chain is uncharacterized protein (237 aa).

Residues 1–25 (MRHIFQRLLPRRLWLAGLPCLALLG) constitute a signal peptide (tat-type signal). The segment at 201–237 (IERQLSTRKPAGNFSPDTPHESEKPAPSTHEVTPDEP) is disordered.

Exported by the Tat system. The position of the signal peptide cleavage has not been experimentally proven. Can also be exported by the Sec system.

This is an uncharacterized protein from Escherichia coli (strain K12).